Consider the following 168-residue polypeptide: Peptide deformylase 2 (168 aa).

2 residues coordinate Fe cation: C91 and H133. E134 is an active-site residue. H137 lines the Fe cation pocket.

Belongs to the polypeptide deformylase family. Fe(2+) is required as a cofactor.

It carries out the reaction N-terminal N-formyl-L-methionyl-[peptide] + H2O = N-terminal L-methionyl-[peptide] + formate. In terms of biological role, removes the formyl group from the N-terminal Met of newly synthesized proteins. Requires at least a dipeptide for an efficient rate of reaction. N-terminal L-methionine is a prerequisite for activity but the enzyme has broad specificity at other positions. The sequence is that of Peptide deformylase 2 from Vibrio vulnificus (strain CMCP6).